The following is an 828-amino-acid chain: Outer membrane usher protein MrkC (828 aa).

An N-terminal signal peptide occupies residues M1 to A18. C813 and C827 form a disulfide bridge.

It belongs to the fimbrial export usher family.

It localises to the cell outer membrane. In terms of biological role, involved in the export and assembly of the type 3 fimbrial subunit (MrkA). The chain is Outer membrane usher protein MrkC (mrkC) from Klebsiella pneumoniae.